The sequence spans 154 residues: UPF0225 protein YPTB2098 (154 aa).

This sequence belongs to the UPF0225 family.

This chain is UPF0225 protein YPTB2098, found in Yersinia pseudotuberculosis serotype I (strain IP32953).